The following is a 538-amino-acid chain: MPKILKFNEEARRALERGVDKVANAVKVTLGPKGRNVVIEKSWGSPTITNDGVSIAKEIELEDKFENLGAQLVKEVASKTNDVAGDGTTTATVLAQAMIKEGLKNVAAGANPILLKRGIDKAVEKAVEEIKKVSKKLSGREDIAHVAAISANSAEIGELIAEAMDKVGEDGVITVEDSKTLETYVEFTEGMQFDRGYISPYFVTDAEKMEVVLKEPFILITDRKLSAVKPLIPILEKVAQTGRPLLVIAEDVEGEVLTTLVLNKLKGTLQSCAVKAPGFGERRKAMLQDIAILTGGQVASEELGINLEDLTLEDLGRADLVRVKKDETIIIGGKGDPEAIKKRIAQIKAQIEETTSEYEKETLQERMAKLAGGVAVIKVGAATETELKEKKHRIEDALSATRAAVEEGIVPGGGVTLLRARKAVEKVIEELEGDEKIGAQIVYKALSAPIKQIAENAGYDGAVIIEKILSNDDPAYGFDALRGEYCNMFERGIIDPAKVTRSALQNAASIAGMLLTTEVLIVEKPEEKKETPSIPEEF.

ATP contacts are provided by residues 29–32, 86–90, G413, 479–481, and D495; these read TLGP, DGTTT, and DAL.

This sequence belongs to the chaperonin (HSP60) family. Forms a cylinder of 14 subunits composed of two heptameric rings stacked back-to-back. Interacts with the co-chaperonin GroES.

The protein resides in the cytoplasm. It carries out the reaction ATP + H2O + a folded polypeptide = ADP + phosphate + an unfolded polypeptide.. Functionally, together with its co-chaperonin GroES, plays an essential role in assisting protein folding. The GroEL-GroES system forms a nano-cage that allows encapsulation of the non-native substrate proteins and provides a physical environment optimized to promote and accelerate protein folding. In Thermotoga petrophila (strain ATCC BAA-488 / DSM 13995 / JCM 10881 / RKU-1), this protein is Chaperonin GroEL.